The primary structure comprises 155 residues: Large ribosomal subunit protein eL24 (155 aa).

A compositionally biased stretch (basic and acidic residues) spans 98 to 129 (PEVRKAKRDDKAKADKEKKKADKAARKAEKAK). Positions 98–155 (PEVRKAKRDDKAKADKEKKKADKAARKAEKAKLAAAQGSKVSKQQAKGAFQKVAATSR) are disordered.

The protein belongs to the eukaryotic ribosomal protein eL24 family.

This is Large ribosomal subunit protein eL24 (RPL24) from Candida glabrata (strain ATCC 2001 / BCRC 20586 / JCM 3761 / NBRC 0622 / NRRL Y-65 / CBS 138) (Yeast).